We begin with the raw amino-acid sequence, 267 residues long: MHAGLRCDASTDPGLCGVVAVGDHPAAAAAWAEQLGVPVLEHRPQEGSGVILLADEPPALQLLGRRAPGPVAIDFTDHQLQRRVAGSTLRRDPLARAVGLHRRPQTAVVDATAGLGHDGWVLAALGARMTWIERSPVLAALLDAALERARANAQHADTATRVRLHPGDLCHLLPELDATSREVVYIDPMYPDGSTRGAVGRPAQVLRALHADARGPDEDQLLAAALGHATRRVVVKRPQRAAPVAGPPPSRSVAGRAVRFDVYEVNG.

S-adenosyl-L-methionine contacts are provided by residues 133–134 and D187; that span reads ER.

It belongs to the methyltransferase superfamily. RsmJ family.

The protein resides in the cytoplasm. It catalyses the reaction guanosine(1516) in 16S rRNA + S-adenosyl-L-methionine = N(2)-methylguanosine(1516) in 16S rRNA + S-adenosyl-L-homocysteine + H(+). Specifically methylates the guanosine in position 1516 of 16S rRNA. The sequence is that of Ribosomal RNA small subunit methyltransferase J from Halorhodospira halophila (strain DSM 244 / SL1) (Ectothiorhodospira halophila (strain DSM 244 / SL1)).